Reading from the N-terminus, the 68-residue chain is Sec-independent protein translocase protein TatA (68 aa).

A helical membrane pass occupies residues 1–21 (MGSFSIWHWLIVLVVVLLLFG). The tract at residues 46–68 (EEAASADKTIDGKTVEHKSDEVR) is disordered. The segment covering 53–68 (KTIDGKTVEHKSDEVR) has biased composition (basic and acidic residues).

Belongs to the TatA/E family. The Tat system comprises two distinct complexes: a TatABC complex, containing multiple copies of TatA, TatB and TatC subunits, and a separate TatA complex, containing only TatA subunits. Substrates initially bind to the TatABC complex, which probably triggers association of the separate TatA complex to form the active translocon.

It is found in the cell inner membrane. Functionally, part of the twin-arginine translocation (Tat) system that transports large folded proteins containing a characteristic twin-arginine motif in their signal peptide across membranes. TatA could form the protein-conducting channel of the Tat system. This Sinorhizobium fredii (strain NBRC 101917 / NGR234) protein is Sec-independent protein translocase protein TatA.